Here is a 280-residue protein sequence, read N- to C-terminus: uncharacterized protein (280 aa).

Residues 96–208 (DKSIGIFQRF…GYLSTPPPVK (113 aa)) form the DUF1279 domain. Residues 115 to 135 (VMVPVHIVTSTVWFGSFYYAA) form a helical membrane-spanning segment. Residues 207 to 274 (VKEFLQDKME…KLQETKDKMS (68 aa)) are a coiled coil. The tract at residues 245–280 (SERMEETKERFSETKDKFSEKLQETKDKMSFRKKAD) is disordered.

It localises to the membrane. This is an uncharacterized protein from Danio rerio (Zebrafish).